The primary structure comprises 220 residues: N-(5'-phosphoribosyl)anthranilate isomerase (220 aa).

This sequence belongs to the TrpF family.

The catalysed reaction is N-(5-phospho-beta-D-ribosyl)anthranilate = 1-(2-carboxyphenylamino)-1-deoxy-D-ribulose 5-phosphate. It functions in the pathway amino-acid biosynthesis; L-tryptophan biosynthesis; L-tryptophan from chorismate: step 3/5. The protein is N-(5'-phosphoribosyl)anthranilate isomerase of Xylella fastidiosa (strain M23).